A 219-amino-acid chain; its full sequence is Histone H1.4 (219 aa).

Low complexity predominate over residues 1 to 15 (MSETAPAAPAAPAPA). The interval 1–41 (MSETAPAAPAAPAPAEKTPIKKKARKAAGGAKRKASGPPVS) is disordered. An N-acetylserine modification is found at S2. S2 bears the Phosphoserine mark. The residue at position 17 (K17) is an N6-acetyllysine. At T18 the chain carries Phosphothreonine. Over residues 20–35 (IKKKARKAAGGAKRKA) the composition is skewed to basic residues. K26 carries the post-translational modification N6-acetyllysine; alternate. The residue at position 26 (K26) is an N6-methyllysine; alternate. At K34 the chain carries N6-(beta-hydroxybutyryl)lysine; alternate. N6-succinyllysine; alternate is present on K34. At S36 the chain carries Phosphoserine. Residues 36–109 (SGPPVSELIT…GASGSFKLNK (74 aa)) form the H15 domain. The residue at position 52 (K52) is an N6-(beta-hydroxybutyryl)lysine. R54 bears the Citrulline mark. Residues K64, K85, K90, and K106 each carry the N6-(beta-hydroxybutyryl)lysine modification. The tract at residues 92–219 (TLVQTKGTGA…KPKKTAAKKK (128 aa)) is disordered. Positions 119–140 (KAKKAGAAKAKKPAGAAKKPKK) are enriched in basic residues. T146 is subject to Phosphothreonine. 2 stretches are compositionally biased toward basic residues: residues 149 to 160 (KSTKKTPKKAKK) and 168 to 185 (KKAKSPKKAKATKAKKAP). Position 150 is an ADP-ribosylserine (S150). S187 is subject to Phosphoserine. The segment covering 192–219 (RAVKPKAAKPKTSKPKAAKPKKTAAKKK) has biased composition (basic residues).

The protein belongs to the histone H1/H5 family. In terms of processing, H1 histones are progressively phosphorylated during the cell cycle, becoming maximally phosphorylated during late G2 phase and M phase, and being dephosphorylated sharply thereafter. Post-translationally, acetylated at Lys-26. Deacetylated at Lys-26 by SIRT1. Citrullination at Arg-54 (H1R54ci) by PADI4 takes place within the DNA-binding site of H1 and results in its displacement from chromatin and global chromatin decondensation, thereby promoting pluripotency and stem cell maintenance. In terms of processing, ADP-ribosylated on Ser-150 in response to DNA damage.

Its subcellular location is the nucleus. It localises to the chromosome. Histone H1 protein binds to linker DNA between nucleosomes forming the macromolecular structure known as the chromatin fiber. Histones H1 are necessary for the condensation of nucleosome chains into higher-order structured fibers. Also acts as a regulator of individual gene transcription through chromatin remodeling, nucleosome spacing and DNA methylation. This chain is Histone H1.4, found in Rattus norvegicus (Rat).